The chain runs to 289 residues: Glycine--tRNA ligase alpha subunit (289 aa).

This sequence belongs to the class-II aminoacyl-tRNA synthetase family. As to quaternary structure, tetramer of two alpha and two beta subunits.

It localises to the cytoplasm. It carries out the reaction tRNA(Gly) + glycine + ATP = glycyl-tRNA(Gly) + AMP + diphosphate. The sequence is that of Glycine--tRNA ligase alpha subunit from Nitratidesulfovibrio vulgaris (strain ATCC 29579 / DSM 644 / CCUG 34227 / NCIMB 8303 / VKM B-1760 / Hildenborough) (Desulfovibrio vulgaris).